The primary structure comprises 155 residues: MIDITNESGSPSNEEGLVGLATFALDRLRIHPSSELSIILVDEETMEAYHEKFMGLPGPTDVLSFPMDEMRAPGDDEDPPSGLLGDIVLCPTVTARQAAENGRTPDGEAEYLLIHGLLHLLGHDHAEPGEKRVMFRLNDEIIAAWDDHREQTGQR.

Positions Ser-64–Leu-84 are disordered. His-115, His-119, and His-125 together coordinate Zn(2+).

The protein belongs to the endoribonuclease YbeY family. Zn(2+) serves as cofactor.

It localises to the cytoplasm. In terms of biological role, single strand-specific metallo-endoribonuclease involved in late-stage 70S ribosome quality control and in maturation of the 3' terminus of the 16S rRNA. This chain is Endoribonuclease YbeY, found in Cutibacterium acnes (strain DSM 16379 / KPA171202) (Propionibacterium acnes).